A 418-amino-acid polypeptide reads, in one-letter code: Sialidase-3 (418 aa).

An FRIP motif motif is present at residues 24–27 (YRIP). Substrate-binding residues include Arg25 and Arg45. Catalysis depends on Asp50, which acts as the Proton acceptor. The stretch at 129–140 (LCSEDAGCSWGE) is one BNR 1 repeat. Tyr179 and Tyr181 together coordinate substrate. The stretch at 203 to 214 (SDDFGVTWHHGK) is one BNR 2 repeat. Substrate contacts are provided by Glu223 and Arg243. The BNR 3 repeat unit spans residues 254-265 (STDSGGCFQKPT). The residue at position 312 (Ser312) is a Phosphoserine. Arg339 lines the substrate pocket. Tyr369 functions as the Nucleophile in the catalytic mechanism. The active site involves Glu386.

Belongs to the glycosyl hydrolase 33 family. In terms of assembly, interacts with CAV1; this interaction enhances NEU3 sialidase activity within caveola. Interacts with EGFR; this interaction mediates desialylation of EGFR and enhances downstream signaling. In terms of processing, palmitoylated; may regulate intracellular trafficking and anchorage to plasma membrane and endomembranes. In terms of tissue distribution, expressed in heart, brain and cerebral cortex.

It localises to the cell membrane. The protein localises to the membrane. Its subcellular location is the caveola. The protein resides in the early endosome membrane. It is found in the recycling endosome membrane. It localises to the lysosome membrane. It carries out the reaction Hydrolysis of alpha-(2-&gt;3)-, alpha-(2-&gt;6)-, alpha-(2-&gt;8)- glycosidic linkages of terminal sialic acid residues in oligosaccharides, glycoproteins, glycolipids, colominic acid and synthetic substrates.. The catalysed reaction is a ganglioside GD1a + H2O = a ganglioside GM1 + N-acetylneuraminate. The enzyme catalyses a ganglioside GD1a (d18:1(4E)) + H2O = a ganglioside GM1 (d18:1(4E)) + N-acetylneuraminate. It catalyses the reaction a ganglioside GD1b + H2O = a ganglioside GM1 + N-acetylneuraminate. It carries out the reaction a ganglioside GD1b (d18:1(4E)) + H2O = a ganglioside GM1 (d18:1(4E)) + N-acetylneuraminate. The catalysed reaction is a ganglioside GD3 + H2O = a ganglioside GM3 + N-acetylneuraminate. The enzyme catalyses a ganglioside GD3 (d18:1(4E)) + H2O = a ganglioside GM3 (d18:1(4E)) + N-acetylneuraminate. It catalyses the reaction a ganglioside GM3 + H2O = a beta-D-galactosyl-(1-&gt;4)-beta-D-glucosyl-(1&lt;-&gt;1)-ceramide + N-acetylneuraminate. It carries out the reaction a ganglioside GM1 + H2O = a ganglioside GA1 + N-acetylneuraminate. The catalysed reaction is a ganglioside GM1 (d18:1(4E)) + H2O = a ganglioside GA1 (d18:1(4E)) + N-acetylneuraminate. The enzyme catalyses a ganglioside GM2 (d18:1(4E)) + H2O = a ganglioside GA2 (d18:1(4E)) + N-acetylneuraminate. It catalyses the reaction a ganglioside GM3 (d18:1(4E)) + H2O = a beta-D-Gal-(1-&gt;4)-beta-D-Glc-(1&lt;-&gt;1)-Cer(d18:1(4E)) + N-acetylneuraminate. It carries out the reaction a ganglioside GT1b + H2O = a ganglioside GD1b + N-acetylneuraminate. In terms of biological role, exo-alpha-sialidase that catalyzes the hydrolytic cleavage of the terminal sialic acid (N-acetylneuraminic acid, Neu5Ac) of a glycan moiety in the catabolism of glycolipids, glycoproteins and oligosacharides. Displays high catalytic efficiency for gangliosides including alpha-(2-&gt;3)-sialylated GD1a and GM3 and alpha-(2-&gt;8)-sialylated GD3. Plays a role in the regulation of transmembrane signaling through the modulation of ganglioside content of the lipid bilayer and by direct interaction with signaling receptors, such as EGFR. Desialylates EGFR and activates downstream signaling in proliferating cells. Contributes to clathrin-mediated endocytosis by regulating sorting of endocytosed receptors to early and recycling endosomes. The chain is Sialidase-3 (Neu3) from Mus musculus (Mouse).